We begin with the raw amino-acid sequence, 863 residues long: Ribosomal protein S6 kinase alpha-5 (863 aa).

The span at 1-21 (MEGEGGGSGGAGTSGDSGDGG) shows a compositional bias: gly residues. Residues 1 to 22 (MEGEGGGSGGAGTSGDSGDGGE) are disordered. Residues 48 to 317 (FELLKVLGTG…AEEIKEHLFF (270 aa)) form the Protein kinase 1 domain. ATP is bound by residues 54–62 (LGTGAYGKV) and K80. The active-site Proton acceptor is the D176. S211 is subject to Phosphoserine; by autocatalysis. Residues 318-386 (EKIKWDDLAA…VAPSILFKRN (69 aa)) enclose the AGC-kinase C-terminal domain. S359 carries the phosphoserine; by MAPK1, MAPK3 and MAPK14 modification. A phosphoserine; by autocatalysis mark is found at S375 and S380. Residues 428–675 (DKPLGEGSFS…SCDLWSLGVI (248 aa)) form the Protein kinase 2 domain. ATP is bound by residues 431–440 (LGEGSFSICR) and K454. The active-site Proton acceptor is the D608. The residue at position 645 (T645) is a Phosphothreonine; by MAPK1, MAPK3 and MAPK14. 4 positions are modified to phosphoserine: S711, S721, S755, and S759. A Phosphothreonine modification is found at T764. The segment at 805–863 (AKRRKMKRTSTSTETRSSSSESSRSSSSQSHGKTTPTKTLQPSNPTEGSNPDTLFQFSD) is disordered. Positions 813–832 (TSTSTETRSSSSESSRSSSS) are enriched in low complexity. 3 positions are modified to phosphoserine; by autocatalysis: S814, S816, and S822. A compositionally biased stretch (polar residues) spans 833–863 (QSHGKTTPTKTLQPSNPTEGSNPDTLFQFSD). A Phosphoserine modification is found at S862.

This sequence belongs to the protein kinase superfamily. AGC Ser/Thr protein kinase family. S6 kinase subfamily. As to quaternary structure, forms a complex with either MAPK1/ERK2 or MAPK3/ERK1 in quiescent cells which transiently dissociates following mitogenic stimulation. Also associates with MAPK14/p38-alpha. Activated RPS6KA5 associates with and phosphorylates the NF-kappa-B p65 subunit RELA. Interacts with CREBBP and EP300. Mg(2+) serves as cofactor. Ser-375 and Thr-645 phosphorylation is required for kinase activity. Ser-375 and Ser-211 are autophosphorylated by the C-terminal kinase domain, and their phosphorylation is essential for the catalytic activity of the N-terminal kinase domain. Phosphorylated at Ser-359, Thr-645 and Thr-764 by MAPK1/ERK2, MAPK3/ERK1 and MAPK14/p38-alpha. Autophosphorylated at Ser-814, Ser-816 and Ser-822 by the N-terminal kinase domain. In terms of processing, ubiquitinated.

Its subcellular location is the nucleus. It catalyses the reaction L-seryl-[protein] + ATP = O-phospho-L-seryl-[protein] + ADP + H(+). The enzyme catalyses L-threonyl-[protein] + ATP = O-phospho-L-threonyl-[protein] + ADP + H(+). With respect to regulation, activated by phosphorylation at Ser-359, Thr-645 and Thr-764 by MAPK1/ERK2, MAPK3/ERK1 and MAPK14/p38-alpha, and by further autophosphorylation of Ser-211, Ser-375 and Ser-380 by the activated C-terminal kinase domain. The active N-terminal kinase domain finally phosphorylates downstream substrates, as well as Ser-814, Ser-816 and Ser-822 in its own C-terminal region. Serine/threonine-protein kinase that is required for the mitogen or stress-induced phosphorylation of the transcription factors CREB1 and ATF1 and for the regulation of the transcription factors RELA, STAT3 and ETV1/ER81, and that contributes to gene activation by histone phosphorylation and functions in the regulation of inflammatory genes. Phosphorylates CREB1 and ATF1 in response to mitogenic or stress stimuli such as UV-C irradiation, epidermal growth factor (EGF) and anisomycin. Plays an essential role in the control of RELA transcriptional activity in response to TNF and upon glucocorticoid, associates in the cytoplasm with the glucocorticoid receptor NR3C1 and contributes to RELA inhibition and repression of inflammatory gene expression. In skeletal myoblasts is required for phosphorylation of RELA at 'Ser-276' during oxidative stress. In erythropoietin-stimulated cells, is necessary for the 'Ser-727' phosphorylation of STAT3 and regulation of its transcriptional potential. Phosphorylates ETV1/ER81 at 'Ser-191' and 'Ser-216', and thereby regulates its ability to stimulate transcription, which may be important during development and breast tumor formation. Directly represses transcription via phosphorylation of 'Ser-1' of histone H2A. Phosphorylates 'Ser-10' of histone H3 in response to mitogenics, stress stimuli and EGF, which results in the transcriptional activation of several immediate early genes, including proto-oncogenes c-fos/FOS and c-jun/JUN. May also phosphorylate 'Ser-28' of histone H3. Mediates the mitogen- and stress-induced phosphorylation of high mobility group protein 1 (HMGN1/HMG14). In lipopolysaccharide-stimulated primary macrophages, acts downstream of the Toll-like receptor TLR4 to limit the production of pro-inflammatory cytokines. Functions probably by inducing transcription of the MAP kinase phosphatase DUSP1 and the anti-inflammatory cytokine interleukin 10 (IL10), via CREB1 and ATF1 transcription factors. Plays a role in neuronal cell death by mediating the downstream effects of excitotoxic injury. Phosphorylates TRIM7 at 'Ser-106' in response to growth factor signaling via the MEK/ERK pathway, thereby stimulating its ubiquitin ligase activity. The protein is Ribosomal protein S6 kinase alpha-5 (Rps6ka5) of Mus musculus (Mouse).